A 267-amino-acid chain; its full sequence is Translation initiation factor 2 subunit alpha (267 aa).

In terms of domain architecture, S1 motif spans 10-81; the sequence is GELVVGKVDD…SAQQIDLSLK (72 aa).

It belongs to the eIF-2-alpha family. Heterotrimer composed of an alpha, a beta and a gamma chain.

Its function is as follows. eIF-2 functions in the early steps of protein synthesis by forming a ternary complex with GTP and initiator tRNA. In Halobacterium salinarum (strain ATCC 29341 / DSM 671 / R1), this protein is Translation initiation factor 2 subunit alpha.